We begin with the raw amino-acid sequence, 269 residues long: Chymotrypsin-like elastase family member 2A (269 aa).

A signal peptide spans 1–16; sequence MIRALLLSTLVAGALS. The propeptide at 17–28 is activation peptide; it reads CGLPANLPQLPR. The 239-residue stretch at 29–267 folds into the Peptidase S1 domain; the sequence is VVGGEDARPN…YIDWINSVIA (239 aa). Cysteine 58 and cysteine 74 are oxidised to a cystine. Residues histidine 73 and aspartate 121 each act as charge relay system in the active site. 3 disulfides stabilise this stretch: cysteine 155–cysteine 222, cysteine 186–cysteine 202, and cysteine 212–cysteine 243. Serine 216 (charge relay system) is an active-site residue.

Belongs to the peptidase S1 family. Elastase subfamily. In terms of assembly, interacts with CPA1. Interacts with SERPINA1. In terms of tissue distribution, pancreas.

The protein localises to the secreted. The catalysed reaction is Preferential cleavage: Leu-|-Xaa, Met-|-Xaa and Phe-|-Xaa. Hydrolyzes elastin.. In terms of biological role, elastase that enhances insulin signaling and might have a physiologic role in cellular glucose metabolism. Circulates in plasma and reduces platelet hyperactivation, triggers both insulin secretion and degradation, and increases insulin sensitivity. In Sus scrofa (Pig), this protein is Chymotrypsin-like elastase family member 2A (CELA2A).